We begin with the raw amino-acid sequence, 500 residues long: Probable cation transporter HKT1;4 (500 aa).

The Cytoplasmic segment spans residues 1–12 (MPTSRRALAGGA). Helical transmembrane passes span 13–33 (LSMH…LLGV) and 74–94 (LVVL…LVGL). Over 95–156 (ASKWSKLRSD…ADTLRHNAVR (62 aa)) the chain is Cytoplasmic. Residues 121-145 (ADIDGGDVENPTSSGEEAASRRRPM) form a disordered region. Transmembrane regions (helical) follow at residues 157 to 177 (ALFY…AVAV) and 239 to 259 (VLAG…AAAA). Residues 260-290 (ATRREELVEMAREGGRAAAAGYAHLMPARRC) lie on the Cytoplasmic side of the membrane. A run of 2 helical transmembrane segments spans residues 291-311 (WMLA…VCGM) and 346-366 (LSIL…LPPY). Over 367–390 (TTWFPFEENSTTKDSNAENQGIRL) the chain is Cytoplasmic. 2 consecutive transmembrane segments (helical) span residues 391 to 411 (LEST…AICI) and 464 to 484 (GFVG…MFFG). At 485-500 (RLKKFSMKGGKAWKLS) the chain is on the cytoplasmic side.

The protein belongs to the TrkH potassium transport family. HKT (TC 2.A.38.3) subfamily.

The protein localises to the membrane. Probable cation transporter. May be involved in regulation of potassium-sodium homeostasis. In Oryza sativa subsp. japonica (Rice), this protein is Probable cation transporter HKT1;4.